A 508-amino-acid polypeptide reads, in one-letter code: Light-independent protochlorophyllide reductase subunit B (508 aa).

Aspartate 36 is a [4Fe-4S] cluster binding site. The Proton donor role is filled by aspartate 294. 429-430 (GM) contributes to the substrate binding site.

Belongs to the ChlB/BchB/BchZ family. In terms of assembly, protochlorophyllide reductase is composed of three subunits; ChlL, ChlN and ChlB. Forms a heterotetramer of two ChlB and two ChlN subunits. It depends on [4Fe-4S] cluster as a cofactor.

Its subcellular location is the plastid. It localises to the chloroplast. It carries out the reaction chlorophyllide a + oxidized 2[4Fe-4S]-[ferredoxin] + 2 ADP + 2 phosphate = protochlorophyllide a + reduced 2[4Fe-4S]-[ferredoxin] + 2 ATP + 2 H2O. Its pathway is porphyrin-containing compound metabolism; chlorophyll biosynthesis (light-independent). Functionally, component of the dark-operative protochlorophyllide reductase (DPOR) that uses Mg-ATP and reduced ferredoxin to reduce ring D of protochlorophyllide (Pchlide) to form chlorophyllide a (Chlide). This reaction is light-independent. The NB-protein (ChlN-ChlB) is the catalytic component of the complex. The sequence is that of Light-independent protochlorophyllide reductase subunit B from Pyropia yezoensis (Susabi-nori).